The following is a 524-amino-acid chain: Inosine-5'-monophosphate dehydrogenase 4 (524 aa).

2 consecutive CBS domains span residues 122 to 183 (FINS…VVSE) and 185 to 241 (MTKN…PLAS). Residue Ser-125 is modified to Phosphoserine. Residues 279–281 (DSS) and 329–331 (GMG) contribute to the NAD(+) site. K(+) is bound by residues Gly-331 and Gly-333. IMP is bound at residue Ser-334. Cys-336 lines the K(+) pocket. Catalysis depends on Cys-336, which acts as the Thioimidate intermediate. IMP is bound by residues 369–371 (DGG), 392–393 (GG), and 416–420 (YRGMG). Arg-438 serves as the catalytic Proton acceptor. Position 450 (Gln-450) interacts with IMP. Positions 509, 510, and 511 each coordinate K(+).

Belongs to the IMPDH/GMPR family. As to quaternary structure, homotetramer. Seems to be able to form heterotetramers composed from more than 1 of the 3 IMPDH gene products (IMD2-4). K(+) is required as a cofactor.

The protein localises to the cytoplasm. The enzyme catalyses IMP + NAD(+) + H2O = XMP + NADH + H(+). The protein operates within purine metabolism; XMP biosynthesis via de novo pathway; XMP from IMP: step 1/1. Its activity is regulated as follows. Mycophenolic acid (MPA) is a non-competitive inhibitor that prevents formation of the closed enzyme conformation by binding to the same site as the amobile flap. In contrast, mizoribine monophosphate (MZP) is a competitive inhibitor that induces the closed conformation. MPA is a potent inhibitor of mammalian IMPDHs but a poor inhibitor of the bacterial enzymes. MZP is a more potent inhibitor of bacterial IMPDH. Catalyzes the conversion of inosine 5'-phosphate (IMP) to xanthosine 5'-phosphate (XMP), the first committed and rate-limiting step in the de novo synthesis of guanine nucleotides, and therefore plays an important role in the regulation of cell growth. The sequence is that of Inosine-5'-monophosphate dehydrogenase 4 from Saccharomyces cerevisiae (strain ATCC 204508 / S288c) (Baker's yeast).